The primary structure comprises 56 residues: Single-pass membrane and coiled-coil domain-containing protein 4 homolog (56 aa).

The interval 1-27 is disordered; it reads MRQLPGKAAKETRKMKRERKQQNKEGH. The stretch at 9-31 forms a coiled coil; sequence AKETRKMKRERKQQNKEGHNRVV. Residues 30 to 50 traverse the membrane as a helical segment; sequence VVTVAIPVCLAVFVMLIVYVY.

The protein belongs to the SMCO4 family.

It is found in the membrane. In Nematostella vectensis (Starlet sea anemone), this protein is Single-pass membrane and coiled-coil domain-containing protein 4 homolog.